Here is a 1125-residue protein sequence, read N- to C-terminus: Probable phospholipid-transporting ATPase IIB (1125 aa).

The Cytoplasmic portion of the chain corresponds to Met1–Thr131. A helical transmembrane segment spans residues Phe132 to Val152. The Extracellular portion of the chain corresponds to Ala153 to Leu161. Residues Lys162–Val182 traverse the membrane as a helical segment. The Cytoplasmic portion of the chain corresponds to Arg183–Lys369. Residues Ala370–Gly390 traverse the membrane as a helical segment. The Extracellular portion of the chain corresponds to Pro391–Asn395. The helical transmembrane segment at Leu396–Leu415 threads the bilayer. Topologically, residues Asp416–Gly928 are cytoplasmic. Asp455 functions as the 4-aspartylphosphate intermediate in the catalytic mechanism. Asp455, Lys456, and Thr457 together coordinate ATP. Residue Asp455 coordinates Mg(2+). Mg(2+) is bound at residue Thr457. Positions Gln500 to Ser511 are enriched in low complexity. 2 disordered regions span residues Gln500–Val525 and Gly552–Gln574. Residues Glu558–Ser567 show a composition bias toward acidic residues. 11 residues coordinate ATP: Glu580, Phe622, Lys627, Lys646, Arg675, Thr676, Thr755, Gly756, Asp757, Arg837, and Lys843. Asp863 contributes to the Mg(2+) binding site. ATP-binding residues include Asn866 and Asp867. Residue Asp867 participates in Mg(2+) binding. Residues Met929–Leu949 traverse the membrane as a helical segment. The Extracellular segment spans residues Tyr950–Gln951. A helical membrane pass occupies residues Gly952 to Leu972. Residues Asp973 to Thr1001 lie on the Cytoplasmic side of the membrane. Residues Phe1002–Val1022 traverse the membrane as a helical segment. Residues Leu1023–His1030 are Extracellular-facing. Residues Val1031 to Ile1051 form a helical membrane-spanning segment. At Arg1052–His1055 the chain is on the cytoplasmic side. A helical transmembrane segment spans residues Trp1056–Leu1076. At Asn1077–Arg1088 the chain is on the extracellular side. The chain crosses the membrane as a helical span at residues Val1089 to Lys1109. The Cytoplasmic portion of the chain corresponds to Tyr1110–Ser1125.

The protein belongs to the cation transport ATPase (P-type) (TC 3.A.3) family. Type IV subfamily. The cofactor is Mg(2+).

The protein localises to the golgi apparatus. It localises to the trans-Golgi network membrane. It catalyses the reaction ATP + H2O + phospholipidSide 1 = ADP + phosphate + phospholipidSide 2.. The protein is Probable phospholipid-transporting ATPase IIB (atp9b) of Danio rerio (Zebrafish).